Reading from the N-terminus, the 213-residue chain is Pyridoxine/pyridoxamine 5'-phosphate oxidase (213 aa).

FMN-binding positions include 60-65 (RMVLMK), 75-76 (YS), lysine 82, and glutamine 104. Lysine 65 contacts substrate. Residues tyrosine 122 and arginine 126 each coordinate substrate. FMN is bound by residues 139-140 (QS) and tryptophan 184. 190–192 (RLH) contributes to the substrate binding site. Residue arginine 194 participates in FMN binding.

Belongs to the pyridoxamine 5'-phosphate oxidase family. As to quaternary structure, homodimer. The cofactor is FMN.

The catalysed reaction is pyridoxamine 5'-phosphate + O2 + H2O = pyridoxal 5'-phosphate + H2O2 + NH4(+). It carries out the reaction pyridoxine 5'-phosphate + O2 = pyridoxal 5'-phosphate + H2O2. It participates in cofactor metabolism; pyridoxal 5'-phosphate salvage; pyridoxal 5'-phosphate from pyridoxamine 5'-phosphate: step 1/1. It functions in the pathway cofactor metabolism; pyridoxal 5'-phosphate salvage; pyridoxal 5'-phosphate from pyridoxine 5'-phosphate: step 1/1. In terms of biological role, catalyzes the oxidation of either pyridoxine 5'-phosphate (PNP) or pyridoxamine 5'-phosphate (PMP) into pyridoxal 5'-phosphate (PLP). This is Pyridoxine/pyridoxamine 5'-phosphate oxidase from Nitrobacter hamburgensis (strain DSM 10229 / NCIMB 13809 / X14).